Here is a 591-residue protein sequence, read N- to C-terminus: Aspartate--tRNA ligase (591 aa).

Position 173 (Glu173) interacts with L-aspartate. An aspartate region spans residues 197–200 (QLFK). Position 219 (Arg219) interacts with L-aspartate. ATP contacts are provided by residues 219–221 (RDE) and Gln228. His448 serves as a coordination point for L-aspartate. Residue Glu482 participates in ATP binding. Arg489 lines the L-aspartate pocket. Residue 534 to 537 (GLDR) participates in ATP binding.

This sequence belongs to the class-II aminoacyl-tRNA synthetase family. Type 1 subfamily. Homodimer.

The protein resides in the cytoplasm. The catalysed reaction is tRNA(Asp) + L-aspartate + ATP = L-aspartyl-tRNA(Asp) + AMP + diphosphate. Catalyzes the attachment of L-aspartate to tRNA(Asp) in a two-step reaction: L-aspartate is first activated by ATP to form Asp-AMP and then transferred to the acceptor end of tRNA(Asp). The protein is Aspartate--tRNA ligase of Shewanella sp. (strain MR-4).